The primary structure comprises 393 residues: Protein FAM47E (393 aa).

Residues 326–354 are a coiled coil; the sequence is VSHKAQEENFKKELQEQEELLADLHGTVA.

Belongs to the FAM47 family. In terms of assembly, interacts with PRMT5; the interaction is direct. Interacts with WDR77.

It localises to the nucleus. The protein localises to the chromosome. It is found in the cytoplasm. In terms of biological role, promotes histone methylation by localizing the arginine methyltransferase PRMT5 to chromatin. The chain is Protein FAM47E (FAM47E) from Homo sapiens (Human).